We begin with the raw amino-acid sequence, 452 residues long: Bifunctional protein GlmU (452 aa).

Residues 1–225 (MEVVILAAGQ…VSETLGVNSK (225 aa)) are pyrophosphorylase. UDP-N-acetyl-alpha-D-glucosamine contacts are provided by residues 6–9 (LAAG), Lys-20, Gln-71, 76–77 (GT), 98–100 (YGD), Gly-135, Glu-150, Asn-165, and Asn-223. Asp-100 contacts Mg(2+). Residue Asn-223 participates in Mg(2+) binding. The segment at 226–246 (PQLAELERIHQRNIAQRLMED) is linker. The segment at 247–452 (GVTLIDPARI…AGWKRPVKQR (206 aa)) is N-acetyltransferase. UDP-N-acetyl-alpha-D-glucosamine-binding residues include Arg-329 and Lys-347. His-359 acts as the Proton acceptor in catalysis. The UDP-N-acetyl-alpha-D-glucosamine site is built by Tyr-362 and Asn-373. Acetyl-CoA-binding positions include Ala-376, 382–383 (NY), Ser-401, Ala-419, and Arg-436.

It in the N-terminal section; belongs to the N-acetylglucosamine-1-phosphate uridyltransferase family. The protein in the C-terminal section; belongs to the transferase hexapeptide repeat family. Homotrimer. Requires Mg(2+) as cofactor.

Its subcellular location is the cytoplasm. It catalyses the reaction alpha-D-glucosamine 1-phosphate + acetyl-CoA = N-acetyl-alpha-D-glucosamine 1-phosphate + CoA + H(+). The catalysed reaction is N-acetyl-alpha-D-glucosamine 1-phosphate + UTP + H(+) = UDP-N-acetyl-alpha-D-glucosamine + diphosphate. It functions in the pathway nucleotide-sugar biosynthesis; UDP-N-acetyl-alpha-D-glucosamine biosynthesis; N-acetyl-alpha-D-glucosamine 1-phosphate from alpha-D-glucosamine 6-phosphate (route II): step 2/2. The protein operates within nucleotide-sugar biosynthesis; UDP-N-acetyl-alpha-D-glucosamine biosynthesis; UDP-N-acetyl-alpha-D-glucosamine from N-acetyl-alpha-D-glucosamine 1-phosphate: step 1/1. It participates in bacterial outer membrane biogenesis; LPS lipid A biosynthesis. Catalyzes the last two sequential reactions in the de novo biosynthetic pathway for UDP-N-acetylglucosamine (UDP-GlcNAc). The C-terminal domain catalyzes the transfer of acetyl group from acetyl coenzyme A to glucosamine-1-phosphate (GlcN-1-P) to produce N-acetylglucosamine-1-phosphate (GlcNAc-1-P), which is converted into UDP-GlcNAc by the transfer of uridine 5-monophosphate (from uridine 5-triphosphate), a reaction catalyzed by the N-terminal domain. This Azoarcus sp. (strain BH72) protein is Bifunctional protein GlmU.